A 361-amino-acid polypeptide reads, in one-letter code: Phosphoserine aminotransferase (361 aa).

Arg43 contributes to the L-glutamate binding site. Pyridoxal 5'-phosphate-binding positions include Ala77–Ser78, Trp103, Thr153, Asp173, and Gln196. N6-(pyridoxal phosphate)lysine is present on Lys197. Residue Asn238–Thr239 participates in pyridoxal 5'-phosphate binding.

It belongs to the class-V pyridoxal-phosphate-dependent aminotransferase family. SerC subfamily. In terms of assembly, homodimer. Requires pyridoxal 5'-phosphate as cofactor.

The protein resides in the cytoplasm. The enzyme catalyses O-phospho-L-serine + 2-oxoglutarate = 3-phosphooxypyruvate + L-glutamate. It carries out the reaction 4-(phosphooxy)-L-threonine + 2-oxoglutarate = (R)-3-hydroxy-2-oxo-4-phosphooxybutanoate + L-glutamate. The protein operates within amino-acid biosynthesis; L-serine biosynthesis; L-serine from 3-phospho-D-glycerate: step 2/3. It participates in cofactor biosynthesis; pyridoxine 5'-phosphate biosynthesis; pyridoxine 5'-phosphate from D-erythrose 4-phosphate: step 3/5. Catalyzes the reversible conversion of 3-phosphohydroxypyruvate to phosphoserine and of 3-hydroxy-2-oxo-4-phosphonooxybutanoate to phosphohydroxythreonine. The protein is Phosphoserine aminotransferase of Pseudomonas paraeruginosa (strain DSM 24068 / PA7) (Pseudomonas aeruginosa (strain PA7)).